We begin with the raw amino-acid sequence, 411 residues long: Na(+)-translocating NADH-quinone reductase subunit B (411 aa).

The next 3 helical transmembrane spans lie at 56 to 76, 121 to 141, and 161 to 181; these read IMITVWLCTFPAMFFGMYNAG, FLPIYLVTFAVGGFWEVLFAV, and ILPATIPLWQVALGITFGVVI. T228 carries the FMN phosphoryl threonine modification. Transmembrane regions (helical) follow at residues 254–274, 284–304, 309–329, 345–365, and 368–388; these read FIPGSVGETSTLAILIGAAVL, IMLGVFVGMALTAMLFTAIGS, MFGMPWYWHLVLGGFAFGMVF, LLFGFLIGVMTVLIRVVNPAF, and GIMLAILFANLFAPMIDHFFV.

The protein belongs to the NqrB/RnfD family. As to quaternary structure, composed of six subunits; NqrA, NqrB, NqrC, NqrD, NqrE and NqrF. Requires FMN as cofactor.

It is found in the cell inner membrane. The catalysed reaction is a ubiquinone + n Na(+)(in) + NADH + H(+) = a ubiquinol + n Na(+)(out) + NAD(+). In terms of biological role, NQR complex catalyzes the reduction of ubiquinone-1 to ubiquinol by two successive reactions, coupled with the transport of Na(+) ions from the cytoplasm to the periplasm. NqrA to NqrE are probably involved in the second step, the conversion of ubisemiquinone to ubiquinol. This Chromohalobacter salexigens (strain ATCC BAA-138 / DSM 3043 / CIP 106854 / NCIMB 13768 / 1H11) protein is Na(+)-translocating NADH-quinone reductase subunit B.